The primary structure comprises 207 residues: Glutathione S-transferase 3 (207 aa).

The 78-residue stretch at 2–79 folds into the GST N-terminal domain; that stretch reads VHYKLTYFNA…YLARKFGFVG (78 aa). Glutathione contacts are provided by residues Tyr-8, Lys-43, 49–51, and 63–64; these read GQV and QS. The GST C-terminal domain maps to 81 to 207; sequence TAEEELQADE…WLAKRPETRF (127 aa).

Belongs to the GST superfamily. Sigma family.

The enzyme catalyses RX + glutathione = an S-substituted glutathione + a halide anion + H(+). Its function is as follows. Conjugation of reduced glutathione to a wide number of exogenous and endogenous hydrophobic electrophiles. The chain is Glutathione S-transferase 3 (gst-3) from Caenorhabditis elegans.